The following is a 306-amino-acid chain: Glutaminase (306 aa).

Substrate is bound by residues S66, N116, E159, N166, Y190, Y242, and V260.

Belongs to the glutaminase family. In terms of assembly, homotetramer.

The catalysed reaction is L-glutamine + H2O = L-glutamate + NH4(+). The chain is Glutaminase from Caulobacter vibrioides (strain ATCC 19089 / CIP 103742 / CB 15) (Caulobacter crescentus).